The following is an 86-amino-acid chain: Small ribosomal subunit protein uS17 (86 aa).

The protein belongs to the universal ribosomal protein uS17 family. Part of the 30S ribosomal subunit.

One of the primary rRNA binding proteins, it binds specifically to the 5'-end of 16S ribosomal RNA. The chain is Small ribosomal subunit protein uS17 from Bifidobacterium adolescentis (strain ATCC 15703 / DSM 20083 / NCTC 11814 / E194a).